The sequence spans 2104 residues: Protein Ycf2 (2104 aa).

Residue 1396–1403 participates in ATP binding; sequence GPVETGRS.

This sequence belongs to the Ycf2 family.

The protein localises to the plastid. Its subcellular location is the chloroplast stroma. Its function is as follows. Probable ATPase of unknown function. Its presence in a non-photosynthetic plant (Epifagus virginiana) and experiments in tobacco indicate that it has an essential function which is probably not related to photosynthesis. The polypeptide is Protein Ycf2 (ycf2-A) (Adiantum capillus-veneris (Maidenhair fern)).